Reading from the N-terminus, the 102-residue chain is Alpha-hemoglobin-stabilizing protein (102 aa).

Belongs to the AHSP family. In terms of assembly, monomer. Forms a heterodimer with free alpha-hemoglobin. Does not bind beta-hemoglobin nor alpha(2)beta(2) hemoglobin A. Expressed in blood and bone marrow.

Its subcellular location is the cytoplasm. Its function is as follows. Acts as a chaperone to prevent the harmful aggregation of alpha-hemoglobin during normal erythroid cell development. Specifically protects free alpha-hemoglobin from precipitation. It is predicted to modulate pathological states of alpha-hemoglobin excess such as beta-thalassemia. This is Alpha-hemoglobin-stabilizing protein (AHSP) from Homo sapiens (Human).